The primary structure comprises 283 residues: Thymidylate synthase (283 aa).

DUMP is bound at residue Arg22. The active-site Nucleophile is Cys160. DUMP-binding positions include 180 to 183, Asn191, and 221 to 223; these read RSCD and HIY. Position 183 (Asp183) interacts with (6R)-5,10-methylene-5,6,7,8-tetrahydrofolate. Ser282 contacts (6R)-5,10-methylene-5,6,7,8-tetrahydrofolate.

Belongs to the thymidylate synthase family. Bacterial-type ThyA subfamily. Homodimer.

Its subcellular location is the cytoplasm. The catalysed reaction is dUMP + (6R)-5,10-methylene-5,6,7,8-tetrahydrofolate = 7,8-dihydrofolate + dTMP. It functions in the pathway pyrimidine metabolism; dTTP biosynthesis. In terms of biological role, catalyzes the reductive methylation of 2'-deoxyuridine-5'-monophosphate (dUMP) to 2'-deoxythymidine-5'-monophosphate (dTMP) while utilizing 5,10-methylenetetrahydrofolate (mTHF) as the methyl donor and reductant in the reaction, yielding dihydrofolate (DHF) as a by-product. This enzymatic reaction provides an intracellular de novo source of dTMP, an essential precursor for DNA biosynthesis. The polypeptide is Thymidylate synthase (Haemophilus influenzae (strain ATCC 51907 / DSM 11121 / KW20 / Rd)).